The chain runs to 364 residues: Nucleosome assembly protein 1;2 (364 aa).

Residues 32–86 (VESIKNTLQGLAARHTDVLESLEPKVRKRVEVLREIQSQHDDLEAKFFEERAALE) are a coiled coil. The Nuclear export signal signature appears at 53–68 (LEPKVRKRVEVLREIQ). The short motif at 227–232 (KKKPKK) is the Nuclear localization signal element. 2 disordered regions span residues 250 to 269 (FNFFSPPQVPDDDEEIDEDT) and 301 to 364 (GEAA…CKQQ). 2 stretches are compositionally biased toward acidic residues: residues 259–269 (PDDDEEIDEDT) and 304–340 (AQDEDFEGIMDDEDDDDEDDDDDEDEDDEDDDEDDED). Cysteine methyl ester is present on C361. The S-farnesyl cysteine moiety is linked to residue C361. Positions 362–364 (KQQ) are cleaved as a propeptide — removed in mature form.

Belongs to the nucleosome assembly protein (NAP) family. Binds preferentially histone H1 in vitro. Highly expressed in tissues exhibiting active cell-division activities, such as root and shoot meristems and young flowers.

It localises to the nucleus. Its subcellular location is the cytoplasm. May modulate chromatin structure by regulation of nucleosome assembly/disassembly. The polypeptide is Nucleosome assembly protein 1;2 (NAP1;2) (Oryza sativa subsp. indica (Rice)).